Reading from the N-terminus, the 632-residue chain is Mitoguardin 1 (632 aa).

Residues 70–90 (PVAKKLFVVTAVSAISVIFLA) form a helical membrane-spanning segment. S289 and S293 each carry phosphoserine.

It belongs to the mitoguardin family. As to quaternary structure, homodimer and heterodimer; forms heterodimers with MIGA2. Interacts with PLD6/MitoPLD.

It is found in the mitochondrion outer membrane. In terms of biological role, regulator of mitochondrial fusion: acts by forming homo- and heterodimers at the mitochondrial outer membrane and facilitating the formation of PLD6/MitoPLD dimers. May act by regulating phospholipid metabolism via PLD6/MitoPLD. The chain is Mitoguardin 1 from Homo sapiens (Human).